Consider the following 321-residue polypeptide: MKEIVYYDFDLDLNPEIRWVKIFDAFKDKITELKSHLVNLLKPHDSSLKVISMLSGFINPENILHYGEIKYITSKLGMKMYEIIILQLVYEITAACTSAVIDVGDNKLFLRTLDWPLEFLKDFTIGLNIIRANKKIGQTITWIGYVGFLTAWNHKHNYTIAINYRNSNESNQSRLAKIIKNIQRTITLKWPVGYMVRYLIENEKPIEKVIAFTTEVQLISPCYITVYISDGQSFVVTRDCHKTVDIRTDNLIQTNCDFGKNKPNILYSVERRDYVESVIASITTDISPDKLIKTLLKFPVVNEDTIFWVCQFEGKTYSNIV.

This is an uncharacterized protein from Acanthamoeba polyphaga (Amoeba).